A 61-amino-acid chain; its full sequence is uncharacterized protein (61 aa).

2 helical membrane passes run 7-24 (FNVF…YKLF) and 29-48 (VSTT…IVGL).

Its subcellular location is the cell membrane. This is an uncharacterized protein from Bacillus subtilis (strain 168).